Here is a 207-residue protein sequence, read N- to C-terminus: Superoxide dismutase [Mn] (207 aa).

Mn(2+) contacts are provided by His-30, His-78, Asp-166, and His-170.

It belongs to the iron/manganese superoxide dismutase family. In terms of assembly, homodimer. Mn(2+) serves as cofactor.

It carries out the reaction 2 superoxide + 2 H(+) = H2O2 + O2. In terms of biological role, destroys superoxide anion radicals which are normally produced within the cells and which are toxic to biological systems. This Chlamydia pneumoniae (Chlamydophila pneumoniae) protein is Superoxide dismutase [Mn] (sodA).